The sequence spans 425 residues: Adenylosuccinate synthetase (425 aa).

Residues 12–18 and 40–42 contribute to the GTP site; these read GDEGKGK and GHT. The Proton acceptor role is filled by aspartate 13. Positions 13 and 40 each coordinate Mg(2+). IMP contacts are provided by residues 13–16, 38–41, threonine 126, arginine 140, glutamine 221, threonine 236, and arginine 300; these read DEGK and NAGH. The active-site Proton donor is histidine 41. A substrate-binding site is contributed by 296 to 302; it reads ATTGRPR. GTP-binding positions include arginine 302, 328–330, and 410–412; these read KLD and STG.

It belongs to the adenylosuccinate synthetase family. In terms of assembly, homodimer. It depends on Mg(2+) as a cofactor.

Its subcellular location is the cytoplasm. It carries out the reaction IMP + L-aspartate + GTP = N(6)-(1,2-dicarboxyethyl)-AMP + GDP + phosphate + 2 H(+). It functions in the pathway purine metabolism; AMP biosynthesis via de novo pathway; AMP from IMP: step 1/2. In terms of biological role, plays an important role in the de novo pathway of purine nucleotide biosynthesis. Catalyzes the first committed step in the biosynthesis of AMP from IMP. In Thermodesulfovibrio yellowstonii (strain ATCC 51303 / DSM 11347 / YP87), this protein is Adenylosuccinate synthetase.